We begin with the raw amino-acid sequence, 877 residues long: DNA repair protein rad16 (877 aa).

S71 bears the Phosphoserine; by CK2 mark. The interval 440–490 (SKSIKKPEPSKEREASNTTSRKGVPPSKRRRVRGGNNATSRTTSDNTDAND) is disordered. Over residues 444–454 (KKPEPSKEREA) the composition is skewed to basic and acidic residues. Residues 475–490 (NNATSRTTSDNTDAND) show a composition bias toward polar residues. Residues 652 to 732 (RVIVDLREFR…IPVLLIEFEQ (81 aa)) form the ERCC4 domain.

This sequence belongs to the XPF family. In terms of assembly, heterodimer composed of rad16 and swi10.

It is found in the nucleus. The protein resides in the cytoplasm. The protein localises to the cytoskeleton. Its subcellular location is the microtubule organizing center. It localises to the spindle pole body. Functionally, endonuclease that specifically degrades single-stranded DNA and which is involved in nucleotide excision repair of DNA damaged with UV light, bulky adducts, or cross-linking agents. Required for double strand break-induced interchromosomal gene conversion. This is DNA repair protein rad16 (rad16) from Schizosaccharomyces pombe (strain 972 / ATCC 24843) (Fission yeast).